The chain runs to 455 residues: Beta-1,3-galactosyl-O-glycosyl-glycoprotein beta-1,6-N-acetylglucosaminyltransferase 4 (455 aa).

Residues 1 to 13 (MKIFRCCFKYTLQ) are Cytoplasmic-facing. Residues 14–34 (QKLFILLLTLWLFSLLKLLNV) form a helical; Signal-anchor for type II membrane protein membrane-spanning segment. Topologically, residues 35 to 455 (GRLLFPQRDI…TEGTRQSHTL (421 aa)) are lumenal. The N-linked (GlcNAc...) asparagine glycan is linked to Asn-73. Disulfide bonds link Cys-74/Cys-228, Cys-162/Cys-383, Cys-183/Cys-210, and Cys-392/Cys-424. Residues Asn-287 and Asn-382 are each glycosylated (N-linked (GlcNAc...) asparagine).

It belongs to the glycosyltransferase 14 family.

The protein resides in the golgi apparatus membrane. The enzyme catalyses a 3-O-[beta-D-galactosyl-(1-&gt;3)-N-acetyl-alpha-D-galactosaminyl]-L-seryl-[protein] + UDP-N-acetyl-alpha-D-glucosamine = 3-O-{beta-D-galactosyl-(1-&gt;3)-[N-acetyl-beta-D-glucosaminyl-(1-&gt;6)]-N-acetyl-alpha-D-galactosaminyl}-L-seryl-[protein] + UDP + H(+). The catalysed reaction is a 3-O-[beta-D-galactosyl-(1-&gt;3)-N-acetyl-alpha-D-galactosaminyl]-L-threonyl-[protein] + UDP-N-acetyl-alpha-D-glucosamine = a 3-O-{beta-D-galactosyl-(1-&gt;3)-[N-acetyl-beta-D-glucosaminyl-(1-&gt;6)]-N-acetyl-alpha-D-galactosaminyl}-L-threonyl-[protein] + UDP + H(+). Its pathway is protein modification; protein glycosylation. Glycosyltransferase that mediates core 2 O-glycan branching, an important step in mucin-type biosynthesis. Does not have core 4 O-glycan or I-branching enzyme activity. This chain is Beta-1,3-galactosyl-O-glycosyl-glycoprotein beta-1,6-N-acetylglucosaminyltransferase 4 (Gcnt4), found in Mus musculus (Mouse).